Here is a 385-residue protein sequence, read N- to C-terminus: Basigin (385 aa).

A signal peptide spans 1-21; that stretch reads MAAALFVLLGFALLGTHGASG. Residues 37 to 120 form the Ig-like domain; it reads GGSVELHCEA…SNDPDRNHLT (84 aa). Cystine bridges form between Cys44-Cys108, Cys157-Cys203, and Cys242-Cys301. Positions 138–219 constitute an Ig-like C2-type domain; that stretch reads EPGTVFTTVE…MGTANIQLHG (82 aa). Topologically, residues 138–323 are extracellular; sequence EPGTVFTTVE…ITLRVRSHLA (186 aa). Asn160 carries an N-linked (GlcNAc...) asparagine glycan. The segment at 195–199 is essential for interaction with KDR/VEGFR2; that stretch reads DDQWG. One can recognise an Ig-like V-type domain in the interval 221 to 315; the sequence is PRVKAVKSSE…SKGSDQAIIT (95 aa). N-linked (GlcNAc...) asparagine glycosylation is found at Asn268 and Asn302. A helical transmembrane segment spans residues 324-344; it reads ALWPFLGIVAEVLVLVTIIFI. Residues 345 to 385 lie on the Cytoplasmic side of the membrane; sequence YEKRRKPEDVLDDDDAGSAPLKSSGQHQNDKGKNVRQRNSS. Residues 353-385 form a disordered region; sequence DVLDDDDAGSAPLKSSGQHQNDKGKNVRQRNSS. Ser362 and Ser368 each carry phosphoserine.

As to quaternary structure, homooligomer. Interacts with NXNL1. Interacts with SLC2A1 and SLC16A1/GLUT1. Interacts with XKR8; promoting its localization at the cell membrane. In terms of assembly, (Microbial infection) Interacts with P.falciparum (isolate 3D7) RH5/PfRH5; the interaction is required for the invasion of the host erythrocytes by the parasite at the merozoite stage. Homooligomer. Forms heterooligomers with isoform 3. Interacts with VEGFA and KDR/VEGFR2. Interacts with PPIA/CYPA. Interacts with PPIL2; regulates BSG transport to the cell membrane. Interacts with SLC16A1; interaction mediates SLC16A3 targeting to the plasma membrane. Interacts with SLC16A12. Interacts with SLC16A11. Interacts with AJAP1. Interacts with SLC1A3, ATP1B2, MAG and L1CAM. Interacts with SLC16A3; interaction mediates SLC16A3 targeting to the plasma membrane. As to quaternary structure, (Microbial infection) Interacts with P.falciparum (isolates 3D7 or 7G8) RH5/PfRH5; the interaction is required for the invasion of the host erythrocytes by the parasite at the merozoite stage. In terms of assembly, (Microbial infection) Does not interact with severe acute respiratory syndrome coronavirus 2 (SARS-CoV-2) spike glycoprotein, even if previous works were based on a putative interaction. Forms heterooligomers with isoform 2. As to quaternary structure, interacts with SLC16A6; this interaction mediates targeting to the plasma membrane. In terms of processing, N-glycosylated. As to expression, retina-specific. Expressed in retinal cone photoreceptors (at protein level). Expressed in erythrocytes (at protein level). Highly expressed in melanoma cell lines (at protein level). Highly expressed in the heart, kidney, skeletal muscle and testis. In terms of tissue distribution, highly expressed in the bone marrow, fetal liver, lung, testis and thymus.

The protein resides in the melanosome. It localises to the cell membrane. Its subcellular location is the photoreceptor inner segment. The protein localises to the cell projection. It is found in the cilium. The protein resides in the photoreceptor outer segment. It localises to the endosome. Its subcellular location is the endoplasmic reticulum membrane. The protein localises to the basolateral cell membrane. In terms of biological role, essential for normal retinal maturation and development. Acts as a retinal cell surface receptor for NXNL1 and plays an important role in NXNL1-mediated survival of retinal cone photoreceptors. In association with glucose transporter SLC16A1/GLUT1 and NXNL1, promotes retinal cone survival by enhancing aerobic glycolysis and accelerating the entry of glucose into photoreceptors. May act as a potent stimulator of IL6 secretion in multiple cell lines that include monocytes. Functionally, (Microbial infection) Erythrocyte receptor for P.falciparum RH5 which is essential for erythrocyte invasion by the merozoite stage of P.falciparum isolates 3D7 and Dd2. Its function is as follows. Signaling receptor for cyclophilins, essential for PPIA/CYPA and PPIB/CYPB-dependent signaling related to chemotaxis and adhesion of immune cells. Plays an important role in targeting monocarboxylate transporters SLC16A1/GLUT1, SLC16A11 and SLC16A12 to the plasma membrane. Acts as a coreceptor for vascular endothelial growth factor receptor 2 (KDR/VEGFR2) in endothelial cells enhancing its VEGFA-mediated activation and downstream signaling. Promotes angiogenesis through EPAS1/HIF2A-mediated up-regulation of VEGFA (isoform VEGF-165 and VEGF-121) and KDR/VEGFR2 in endothelial cells. Plays a key role in regulating tumor growth, invasion, metastasis and neoangiogenesis by stimulating the production and release of extracellular matrix metalloproteinases and KDR/VEGFR2 by both tumor cells and stromal cells (fibroblasts and endothelial cells). (Microbial infection) Erythrocyte receptor for P.falciparum RH5 which is essential for erythrocyte invasion by the merozoite stage of P.falciparum isolates 3D7, Dd2, 7G8 and HB3. Binding of P.falciparum RH5 results in BSG dimerization which triggers an increase in intracellular Ca(2+) in the erythrocyte. This essential step leads to a rearrangement of the erythrocyte cytoskeleton required for the merozoite invasion. In terms of biological role, (Microbial infection) Can facilitate human SARS coronavirus (SARS-CoV-1) infection via its interaction with virus-associated PPIA/CYPA. Functionally, (Microbial infection) Can facilitate HIV-1 infection via its interaction with virus-associated PPIA/CYPA. Its function is as follows. (Microbial infection) First described as a receptor for severe acute respiratory syndrome coronavirus 2 (SARS-CoV-2), it is not required for SARS-CoV-2 infection. (Microbial infection) Acts as a receptor for measles virus. In terms of biological role, (Microbial infection) Promotes entry of pentamer-expressing human cytomegalovirus (HCMV) into epithelial and endothelial cells. The sequence is that of Basigin from Homo sapiens (Human).